The following is a 360-amino-acid chain: Aurora kinase B (360 aa).

In terms of domain architecture, Protein kinase spans 93–343 (FDIGRPLGKG…LKGVMEHPWV (251 aa)). ATP-binding positions include 99-107 (LGKGKFGNV) and lysine 122. The active-site Proton acceptor is the aspartate 216.

Belongs to the protein kinase superfamily. Ser/Thr protein kinase family. Aurora subfamily. As to quaternary structure, component of the chromosomal passenger complex (CPC).

Its subcellular location is the nucleus. The protein resides in the chromosome. It localises to the centromere. It is found in the cytoplasm. The protein localises to the cytoskeleton. Its subcellular location is the spindle. The protein resides in the midbody. The catalysed reaction is L-seryl-[protein] + ATP = O-phospho-L-seryl-[protein] + ADP + H(+). It catalyses the reaction L-threonyl-[protein] + ATP = O-phospho-L-threonyl-[protein] + ADP + H(+). Kinase activity is stimulated by cell-cycle specific phosphorylation. Serine/threonine-protein kinase component of the chromosomal passenger complex (CPC), a complex that acts as a key regulator of mitosis. The CPC complex has essential functions at the centromere in ensuring correct chromosome alignment and segregation and is required for chromatin-induced microtubule stabilization and spindle assembly. Involved in the bipolar attachment of spindle microtubules to kinetochores and is a key regulator for the onset of cytokinesis during mitosis. Required for central/midzone spindle assembly and cleavage furrow formation. Key component of the cytokinesis checkpoint, a process required to delay abscission to prevent both premature resolution of intercellular chromosome bridges and accumulation of DNA damage. Phosphorylates 'Ser-10' of histone H3 during mitosis. The chain is Aurora kinase B from Xenopus tropicalis (Western clawed frog).